The following is a 295-amino-acid chain: DegV domain-containing protein MG326 (295 aa).

A DegV domain is found at Thr-4–Ile-292. Thr-63 and Ser-95 together coordinate hexadecanoate.

Its function is as follows. May bind long-chain fatty acids, such as palmitate, and may play a role in lipid transport or fatty acid metabolism. This chain is DegV domain-containing protein MG326, found in Mycoplasma genitalium (strain ATCC 33530 / DSM 19775 / NCTC 10195 / G37) (Mycoplasmoides genitalium).